The sequence spans 797 residues: Glycoprotein gp2 (797 aa).

Positions 1-25 (MGFIYARKLLLCMAVSIYAIGSTTT) are cleaved as a signal peptide. 2 disordered regions span residues 24 to 188 (TTTE…TTAA) and 212 to 549 (AATT…EIVP). Positions 212 to 373 (AATTTAATTT…PDSSTGSTST (162 aa)) are enriched in low complexity. Over residues 374-394 (AEPSSTFTLTPSTATPSTDQF) the composition is skewed to polar residues. Composition is skewed to low complexity over residues 395–430 (TGSS…EAST) and 445–457 (TPDG…NTTP). The span at 466–492 (FADTQQTPDNGVSTQHTTINDHTTANA) shows a compositional bias: polar residues. Basic residues predominate over residues 495–505 (HAGHHRGRAGG). Residue Asn-590 is glycosylated (N-linked (GlcNAc...) asparagine; by host). Residues 766–790 (FALVAATTLTVTILCLLCCLYCMLT) form a helical membrane-spanning segment.

It localises to the virion membrane. In terms of biological role, virulence factor. This is Glycoprotein gp2 (EUs4) from Equine herpesvirus 1 (strain Ab4p) (EHV-1).